A 208-amino-acid chain; its full sequence is Small ribosomal subunit protein uS4 (208 aa).

The S4 RNA-binding domain occupies 98–160; sequence SRLDNVAYNM…AKSYLRIKSS (63 aa).

It belongs to the universal ribosomal protein uS4 family. As to quaternary structure, part of the 30S ribosomal subunit. Contacts protein S5. The interaction surface between S4 and S5 is involved in control of translational fidelity.

One of the primary rRNA binding proteins, it binds directly to 16S rRNA where it nucleates assembly of the body of the 30S subunit. Its function is as follows. With S5 and S12 plays an important role in translational accuracy. The polypeptide is Small ribosomal subunit protein uS4 (Nitrosomonas eutropha (strain DSM 101675 / C91 / Nm57)).